A 306-amino-acid polypeptide reads, in one-letter code: Methionyl-tRNA formyltransferase (306 aa).

109-112 (SILP) serves as a coordination point for (6S)-5,6,7,8-tetrahydrofolate.

This sequence belongs to the Fmt family.

It carries out the reaction L-methionyl-tRNA(fMet) + (6R)-10-formyltetrahydrofolate = N-formyl-L-methionyl-tRNA(fMet) + (6S)-5,6,7,8-tetrahydrofolate + H(+). In terms of biological role, attaches a formyl group to the free amino group of methionyl-tRNA(fMet). The formyl group appears to play a dual role in the initiator identity of N-formylmethionyl-tRNA by promoting its recognition by IF2 and preventing the misappropriation of this tRNA by the elongation apparatus. The protein is Methionyl-tRNA formyltransferase of Sphingopyxis alaskensis (strain DSM 13593 / LMG 18877 / RB2256) (Sphingomonas alaskensis).